We begin with the raw amino-acid sequence, 597 residues long: Arginine--tRNA ligase (597 aa).

Residues 23 to 32 (QAAAARQASQ) show a composition bias toward low complexity. Residues 23 to 43 (QAAAARQASQPLDPQLAPASK) are disordered. The 'HIGH' region signature appears at 137-147 (PNIAKEMHVGH).

Belongs to the class-I aminoacyl-tRNA synthetase family. As to quaternary structure, monomer.

The protein resides in the cytoplasm. The catalysed reaction is tRNA(Arg) + L-arginine + ATP = L-arginyl-tRNA(Arg) + AMP + diphosphate. The chain is Arginine--tRNA ligase from Synechococcus sp. (strain WH7803).